Reading from the N-terminus, the 200-residue chain is Pyrrolidone-carboxylate peptidase (200 aa).

Catalysis depends on residues glutamate 78, cysteine 141, and histidine 165.

It belongs to the peptidase C15 family. In terms of assembly, homotetramer.

The protein localises to the cytoplasm. It carries out the reaction Release of an N-terminal pyroglutamyl group from a polypeptide, the second amino acid generally not being Pro.. In terms of biological role, removes 5-oxoproline from various penultimate amino acid residues except L-proline. This chain is Pyrrolidone-carboxylate peptidase, found in Thermococcus onnurineus (strain NA1).